Here is a 275-residue protein sequence, read N- to C-terminus: MAMDLGGYLTRIGLDGRPRPDLGTLHAIVAAHNRSIPFENLDPLLGIPVADLSAEALFAKLVDRRRGGYCYEHNGLLGYVLEELGFEVERLSGRVVWMRADDAPLPAQTHNVLSVAVPGADGRYLVDVGFGGQTLTSPIRLEAGPVQQTRHEPYRLTRHGDDHTLAAQVRGEWQPLYTFTTEPRPRIDLEVGSWYVSTHPGSHFVTGLTVAVVTDDARYNLRGRNLAVHRSGATEHIRFDSAAQVLDAIVNRFGIDLGDLAGRDVQARVAEVLDT.

Cys70 acts as the Acyl-thioester intermediate in catalysis. Residues His110 and Asp127 contribute to the active site.

This sequence belongs to the arylamine N-acetyltransferase family. As to quaternary structure, homodimer and homotetramer.

The catalysed reaction is an arylamine + acetyl-CoA = an N-acetylarylamine + CoA. Its function is as follows. Catalyzes the transfer of the acetyl group from acetyl coenzyme A to the free amino group of arylamines and hydrazines. Substrates include isoniazid, anisidine, and 4-aminoveratrole, and to a much lesser extent, p-aminobenzoic acid. The protein is Arylamine N-acetyltransferase of Mycolicibacterium smegmatis (Mycobacterium smegmatis).